Consider the following 332-residue polypeptide: D-galactose/methyl-galactoside binding periplasmic protein MglB (332 aa).

The signal sequence occupies residues 1 to 23 (MNKKVLTLSAVMASMLFGAAAHA). The beta-D-galactose site is built by D37 and N114. The beta-D-glucose site is built by D37 and N114. Residues D157, N159, D161, Q163, and Q165 each contribute to the Ca(2+) site. Beta-D-galactose contacts are provided by H175, D177, and R181. 3 residues coordinate beta-D-glucose: H175, D177, and R181. Residue E228 participates in Ca(2+) binding. Residues N234, D259, and N279 each contribute to the beta-D-galactose site. Residues N234, D259, and N279 each coordinate beta-D-glucose.

It belongs to the bacterial solute-binding protein 2 family. The ABC transporter complex is composed of one ATP-binding protein (MglA), two transmembrane proteins (MglC) and a solute-binding protein (MglB).

It is found in the periplasm. Functionally, part of the ABC transporter complex MglABC involved in galactose/methyl galactoside import. In addition, binds D-galactose and D-glucose and plays a role in the chemotaxis towards these two sugars by interacting with the Trg chemoreceptor. This chain is D-galactose/methyl-galactoside binding periplasmic protein MglB (mglB), found in Escherichia coli O6:H1 (strain CFT073 / ATCC 700928 / UPEC).